A 196-amino-acid polypeptide reads, in one-letter code: Large ribosomal subunit protein uL18 (196 aa).

It belongs to the universal ribosomal protein uL18 family. In terms of assembly, part of the 50S ribosomal subunit. Contacts the 5S and 23S rRNAs.

Functionally, this is one of the proteins that bind and probably mediate the attachment of the 5S RNA into the large ribosomal subunit, where it forms part of the central protuberance. This is Large ribosomal subunit protein uL18 from Sulfurisphaera tokodaii (strain DSM 16993 / JCM 10545 / NBRC 100140 / 7) (Sulfolobus tokodaii).